The primary structure comprises 712 residues: Exocyst complex component EXO70I (712 aa).

The signal sequence occupies residues 1 to 18 (MHKKQLMALLMVPQTSDS). Residues 26 to 53 (LESAYSDLESLLRSSKQMEQNIETMETR) are a coiled coil. Asparagine 111 carries N-linked (GlcNAc...) asparagine glycosylation.

The protein belongs to the EXO70 family. In terms of assembly, subunit of the exocyst complex that mediates vesicle tethering during exocytosis. Interacts with VPY at the periarbuscular membrane (PAM) around the arbuscule hyphal tips. As to expression, present at low levels in non-mycorrhizal root tips.

It is found in the cell membrane. Functionally, component of an exocyst subcomplex specifically required for periarbuscular membrane (PAM) biogenesis during arbuscular mycorrhizal (AM) symbiosis with AM fungi (e.g. Glomus versiforme), especially critical during the early branching phase of arbuscule development; probably involved in STR and STR2 delivery into the PAM. The chain is Exocyst complex component EXO70I from Medicago truncatula (Barrel medic).